The primary structure comprises 241 residues: Large ribosomal subunit protein uL1 (241 aa).

Belongs to the universal ribosomal protein uL1 family. Part of the 50S ribosomal subunit.

In terms of biological role, binds directly to 23S rRNA. The L1 stalk is quite mobile in the ribosome, and is involved in E site tRNA release. Protein L1 is also a translational repressor protein, it controls the translation of the L11 operon by binding to its mRNA. The protein is Large ribosomal subunit protein uL1 of Streptomyces coelicolor (strain ATCC BAA-471 / A3(2) / M145).